The sequence spans 580 residues: Glypican-3 (580 aa).

The first 24 residues, 1–24 (MAGTVRTACLVVAMLLSLDFPGQA), serve as a signal peptide directing secretion. Gln-25 is subject to Pyrrolidone carboxylic acid. Cystine bridges form between Cys-35–Cys-72, Cys-65–Cys-262, Cys-73–Cys-265, Cys-197–Cys-349, Cys-252–Cys-285, Cys-274–Cys-422, and Cys-278–Cys-410. 2 N-linked (GlcNAc...) asparagine glycosylation sites follow: Asn-124 and Asn-241. Phosphoserine is present on Ser-352. The N-linked (GlcNAc...) asparagine glycan is linked to Asn-418. O-linked (Xyl...) (glycosaminoglycan) serine glycans are attached at residues Ser-495 and Ser-509. A lipid anchor (GPI-anchor amidated asparagine) is attached at Asn-554. The propeptide at 555–580 (LGNVHSPLKLLTSMAISVVCFFFLVH) is removed in mature form.

The protein belongs to the glypican family. As to quaternary structure, heterodimer; disulfide-linked. Cleavage by a furin-like convertase results in production of alpha and beta chains which form a disulfide-linked heterodimer. Interacts with DPP4. Interacts with FGF2. Interacts with WNT5A. Also interacts with WNT3A and WNT7B. Interacts with hedgehog protein SHH; the heparan sulfate chains are not required for the interaction. Also interacts with hedgehog protein IHH. Interacts with CD81. Interacts with Wnt receptors FZD4, FZD7 and FZD8; the heparan sulfate chains are required for the interaction. Post-translationally, O-glycosylated; contains heparan sulfate and/or chondroitin sulfate. In terms of processing, cleaved intracellularly by a furin-like convertase to generate 2 subunits, alpha and beta, which remain associated through disulfide bonds and are associated with the cell surface via the GPI-anchor. This processing is essential for its role in inhibition of hedgehog signaling. A second proteolytic event may result in cleavage of the protein on the cell surface, separating it from the GPI-anchor and leading to its shedding from the cell surface.

It is found in the cell membrane. Functionally, cell surface proteoglycan. Negatively regulates the hedgehog signaling pathway when attached via the GPI-anchor to the cell surface by competing with the hedgehog receptor PTC1 for binding to hedgehog proteins. Binding to the hedgehog protein SHH triggers internalization of the complex by endocytosis and its subsequent lysosomal degradation. Positively regulates the canonical Wnt signaling pathway by binding to the Wnt receptor Frizzled and stimulating the binding of the Frizzled receptor to Wnt ligands. Positively regulates the non-canonical Wnt signaling pathway. Binds to CD81 which decreases the availability of free CD81 for binding to the transcriptional repressor HHEX, resulting in nuclear translocation of HHEX and transcriptional repression. Inhibits the dipeptidyl peptidase activity of DPP4. Plays a role in limb patterning and skeletal development by controlling the cellular response to BMP4. Modulates the effects of growth factors BMP2, BMP7 and FGF7 on renal branching morphogenesis. Required for coronary vascular development. Plays a role in regulating cell movements during gastrulation. This Pan troglodytes (Chimpanzee) protein is Glypican-3 (GPC3).